We begin with the raw amino-acid sequence, 259 residues long: Putative zinc metalloprotease Rip2 (259 aa).

2 consecutive transmembrane segments (helical) span residues 14–34 and 39–59; these read PIFL…WIAA and PLSY…SLCL. A Zn(2+)-binding site is contributed by His-60. Glu-61 is a catalytic residue. A Zn(2+)-binding site is contributed by His-64. 4 helical membrane-spanning segments follow: residues 96 to 116, 129 to 149, 159 to 179, and 203 to 223; these read LGLP…GAVY, IVSL…LGLT, VFWS…VLNL, and LAPA…TPAL.

It belongs to the peptidase M50B family. Zn(2+) is required as a cofactor.

The protein resides in the cell membrane. The sequence is that of Putative zinc metalloprotease Rip2 (rip2) from Mycolicibacterium smegmatis (strain ATCC 700084 / mc(2)155) (Mycobacterium smegmatis).